Consider the following 97-residue polypeptide: Cobalt transport protein CbiN (97 aa).

Helical transmembrane passes span 6–26 (VLMI…YSGL) and 68–88 (SLLF…FFGY).

The protein belongs to the CbiN family. In terms of assembly, forms an energy-coupling factor (ECF) transporter complex composed of an ATP-binding protein (A component, CbiO), a transmembrane protein (T component, CbiQ) and 2 possible substrate-capture proteins (S components, CbiM and CbiN) of unknown stoichimetry.

It is found in the cell membrane. The protein operates within cofactor biosynthesis; adenosylcobalamin biosynthesis. Functionally, part of the energy-coupling factor (ECF) transporter complex CbiMNOQ involved in cobalt import. The protein is Cobalt transport protein CbiN of Methanococcus maripaludis (strain C7 / ATCC BAA-1331).